The primary structure comprises 173 residues: Photosystem I assembly protein Ycf3 (173 aa).

TPR repeat units lie at residues 35-68 (AFAY…EDDP), 72-105 (SYIL…NPRM), and 120-153 (GEKA…APNN).

The protein belongs to the Ycf3 family.

The protein localises to the cellular thylakoid membrane. Essential for the assembly of the photosystem I (PSI) complex. May act as a chaperone-like factor to guide the assembly of the PSI subunits. The chain is Photosystem I assembly protein Ycf3 from Trichodesmium erythraeum (strain IMS101).